The following is a 203-amino-acid chain: Large ribosomal subunit protein uL3 (203 aa).

Belongs to the universal ribosomal protein uL3 family. In terms of assembly, part of the 50S ribosomal subunit. Forms a cluster with proteins L14 and L19.

One of the primary rRNA binding proteins, it binds directly near the 3'-end of the 23S rRNA, where it nucleates assembly of the 50S subunit. The sequence is that of Large ribosomal subunit protein uL3 from Christiangramia forsetii (strain DSM 17595 / CGMCC 1.15422 / KT0803) (Gramella forsetii).